Here is a 2280-residue protein sequence, read N- to C-terminus: Genome polyprotein (2280 aa).

One can recognise an SF3 helicase domain in the interval 454–608 (ETQANNIRST…EEWKKRNPGK (155 aa)). An ATP-binding site is contributed by 480-487 (GAPGIGKT). At Tyr-965 the chain carries O-(5'-phospho-RNA)-tyrosine. The Peptidase C24 domain maps to 1054–1202 (APTAIVEFTQ…TKVAQRVVKE (149 aa)). Residues His-1084, Glu-1105, and Cys-1169 each act as for 3CLpro activity in the active site. Residues 1442–1567 (GVLYCLDYSK…SVCPATASIF (126 aa)) form the RdRp catalytic domain. The segment at 1722–1746 (GNGSNPEPKQSNNPMVVDPPGTTGP) is disordered. Over residues 1723 to 1735 (NGSNPEPKQSNNP) the composition is skewed to polar residues.

Homodimer. Homomultimer. Specific enzymatic cleavages in vivo yield mature proteins. Pro-Pol is first autocatalytically cleaved, then processes the whole polyprotein. In terms of processing, VPg is uridylylated by the polymerase and is covalently attached to the 5'-end of the polyadenylated genomic and subgenomic RNAs. This uridylylated form acts as a nucleotide-peptide primer for the polymerase.

It localises to the virion. The protein resides in the host cytoplasm. It carries out the reaction a ribonucleoside 5'-triphosphate + H2O = a ribonucleoside 5'-diphosphate + phosphate + H(+). The catalysed reaction is RNA(n) + a ribonucleoside 5'-triphosphate = RNA(n+1) + diphosphate. It catalyses the reaction Endopeptidase with a preference for cleavage when the P1 position is occupied by Glu-|-Xaa and the P1' position is occupied by Gly-|-Yaa.. Together with NTPase and NS4, initiates the formation of the replication complex. Induces the proliferation of the host smooth ER membranes forming long tubular structures. These remodeled membranes probably form the viral factories that contain the replication complex. Its function is as follows. Displays NTPase activity, but no helicase activity. Induces the formation of convoluted membranes derived from the host ER. These remodeled membranes probably form the viral factories that contain the replication complex. Together with NS2 and NS4, initiates the formation of the replication complex. In terms of biological role, probable key protein responsible for the formation of membrane alterations by the virus. Induces the formation of convoluted membranes derived from the host ER. These remodeled membranes probably form the viral factories that contain the replication complex. Together with NS2 and NTPase, initiates the formation of the replication complex. Functionally, viral genome-linked protein is covalently linked to the 5'-end of the positive-strand, negative-strand genomic RNAs and subgenomic RNA. Acts as a genome-linked replication primer. May recruit ribosome to viral RNA thereby promoting viral proteins translation. Interacts with host translation initiation complex to allow the translation of viral proteins. Protease-polymerase p76 processes the polyprotein: Pro-Pol is first released by autocleavage, then all other proteins are cleaved. Cleaves host translation initiation factor eIF4G1, eIF4G2 and PABP1 thereby inducing a shutdown of host protein synthesis. This shutdown may not prevent viral mRNA from being translated since viral Vpg replaces the cap. It is also an RNA-directed RNA polymerase which replicates genomic and antigenomic viral RNA by recognizing specific signals. Also transcribes a subgenomic mRNA by initiating RNA synthesis internally on antigenomic RNA. This sgRNA codes for structural proteins. Catalyzes the covalent attachment VPg with viral RNAs. Its function is as follows. Capsid protein self assembles to form an icosahedral capsid with a T=3 symmetry, about 38 nm in diameter, and consisting of 180 capsid proteins. The capsid encapsulate the genomic RNA and VP2 proteins. Attaches virion to target cells, inducing endocytosis of the viral particle. Acidification of the endosome induces conformational change of capsid protein thereby injecting virus genomic RNA into host cytoplasm. This chain is Genome polyprotein, found in Sapporo virus (isolate GI/Human/Germany/pJG-Sap01) (Hu/Dresden/pJG-Sap01/DE).